Consider the following 548-residue polypeptide: MAYIPDGGAPTAGAIPLGSQCCVCKVELSVSGQNLLDRDVTSKSDPFCVLFIEDNGRWMEFDRTETAVNNLNPAFSKKFVLDYHFEEVQKLKFALFDQDKSSAQLDEHDFLGQFSCSLGTIVSSKKITRPLLLMNDKPAGKGVITIAAQELSDNRVITLSLAGRKLDKKDLFGKSDPFLEFYKPGDDGKWMLVHRTEVIKYTLDPVWKPFTVPLVSLCDGDLEKPIQVMCYDYDSNGGHDFIGEFQTSVLQMSEARDGVPLEIECINPKKQRKKKSYKNSGIIILRSCKIHRNYSFLDYILGGCQLMFTVGIDFTASNGNPLDPSSLHYINPMGTNEYLSAIWAVGQIIQDYDSDKMFPALGFGAQLPPDWKVSHEFAINFNPTNPFCSGVDGIAQAYSACLPHIRFYGPTNFSPIVNHVARFAAQATQQQTATQYFILLIITDGVISDMEETRHAVVQASKLPMSIIIVGVGNADFAAMEFLDGDNRRLRSHTGEEAARDIVQFVPFREFRNAAKETLAKAVLAELPQQVVQYFKHKNLPPTNSEPA.

C2 domains lie at 6–131 (DGGA…TRPL) and 138–263 (PAGK…PLEI). Asp-39, Asp-45, Asp-97, Asp-99, Ser-102, Asp-109, Asp-170, Asp-176, Asp-232, Asp-234, and Asp-240 together coordinate Ca(2+). The linker region stretch occupies residues 247 to 304 (TSVLQMSEARDGVPLEIECINPKKQRKKKSYKNSGIIILRSCKIHRNYSFLDYILGGC). A VWFA domain is found at 305–507 (QLMFTVGIDF…AARDIVQFVP (203 aa)).

Belongs to the copine family. Ca(2+) serves as cofactor.

Its subcellular location is the cytoplasm. It localises to the nucleus. The protein localises to the cell membrane. Its function is as follows. Calcium-dependent phospholipid-binding protein that plays a role in calcium-mediated intracellular processes. Exhibits calcium-dependent cell membrane binding properties. The polypeptide is Copine-2 (Mus musculus (Mouse)).